The primary structure comprises 277 residues: Shikimate dehydrogenase (NADP(+)) (277 aa).

Shikimate contacts are provided by residues serine 18–serine 20 and threonine 65. Residue lysine 69 is the Proton acceptor of the active site. Glutamate 81 contacts NADP(+). Residues asparagine 90 and aspartate 106 each coordinate shikimate. NADP(+) contacts are provided by residues glycine 130–alanine 134, asparagine 154–lysine 159, and methionine 217. Position 219 (tyrosine 219) interacts with shikimate. An NADP(+)-binding site is contributed by glycine 241.

Belongs to the shikimate dehydrogenase family. As to quaternary structure, homodimer.

It carries out the reaction shikimate + NADP(+) = 3-dehydroshikimate + NADPH + H(+). The protein operates within metabolic intermediate biosynthesis; chorismate biosynthesis; chorismate from D-erythrose 4-phosphate and phosphoenolpyruvate: step 4/7. Its function is as follows. Involved in the biosynthesis of the chorismate, which leads to the biosynthesis of aromatic amino acids. Catalyzes the reversible NADPH linked reduction of 3-dehydroshikimate (DHSA) to yield shikimate (SA). The chain is Shikimate dehydrogenase (NADP(+)) from Vibrio parahaemolyticus serotype O3:K6 (strain RIMD 2210633).